Reading from the N-terminus, the 333-residue chain is PDZ domain-containing protein GIPC1 (333 aa).

Residues 1–11 are compositionally biased toward basic residues; that stretch reads MPLGLGRRKKA. A disordered region spans residues 1 to 54; sequence MPLGLGRRKKAPPLVENEEAEPGRGGLGVGEPGPLGGGGSGGPQMGLPPPPPAL. A compositionally biased stretch (gly residues) spans 23 to 44; sequence GRGGLGVGEPGPLGGGGSGGPQ. Serine 68 is subject to Phosphoserine. The PDZ domain occupies 133 to 213; sequence EVEVFKSEDA…GRTFTLKLTE (81 aa). A phosphoserine mark is found at serine 222, serine 225, and serine 232. Residues 223–244 form a disordered region; that stretch reads QRSAGGRPGSGPQLGTGRGTLR. A compositionally biased stretch (gly residues) spans 228–240; it reads GRPGSGPQLGTGR. Residue threonine 242 is modified to Phosphothreonine. Serine 247 is modified (phosphoserine).

This sequence belongs to the GIPC family. Interacts with GLUT1 (C-terminus), ACTN1, KIF1B, MYO6, PLEKHG5, SDC4/syndecan-4 and SEMA4C/semaphorin-4C. Interacts with RGS19 C-terminus. Interacts with HTLV-I Tax through the PDZ domain. As to expression, widely expressed. Expressed in skeletal muscle (at protein level).

Its subcellular location is the cytoplasm. It is found in the membrane. May be involved in G protein-linked signaling. The polypeptide is PDZ domain-containing protein GIPC1 (GIPC1) (Homo sapiens (Human)).